We begin with the raw amino-acid sequence, 238 residues long: Chorionic somatomammotropin hormone 2 (238 aa).

Residues 1–36 (MAPAPSFRGHQWTYNPVRGSCLLLLLVVSNLLLCQG) form the signal peptide. Residue His-66 coordinates Zn(2+). Asn-70, Asn-92, Asn-146, and Asn-160 each carry an N-linked (GlcNAc...) asparagine glycan. A disulfide bridge connects residues Cys-97 and Cys-215. Position 224 (Asp-224) interacts with Zn(2+). A disulfide bond links Cys-232 and Cys-238.

It belongs to the somatotropin/prolactin family.

It localises to the secreted. In Bos taurus (Bovine), this protein is Chorionic somatomammotropin hormone 2 (CSH2).